A 328-amino-acid chain; its full sequence is Adenosine receptor A1 (328 aa).

Residues 1-10 (MPPSISAFQA) are Extracellular-facing. The chain crosses the membrane as a helical span at residues 11-33 (AYIGIEVLIALVSVPGNVLVIWA). The Cytoplasmic portion of the chain corresponds to 34–46 (VKVNQALRDATFC). A helical membrane pass occupies residues 47-69 (FIVSLAVADVAVGALVIPLAILI). At 70 to 80 (NIGPETYFHTC) the chain is on the extracellular side. A disulfide bridge links cysteine 80 with cysteine 169. A helical transmembrane segment spans residues 81–102 (LMVACPVLILTQSSILALLAIA). The Cytoplasmic portion of the chain corresponds to 103–123 (VDRYLRVKIPLRYKAVVTPRR). A helical transmembrane segment spans residues 124–146 (AAVAIAGCWILSLVVGLTPMFGW). Over 147–176 (NNLREVQRAWAANGSVGEPVIKCEFEKVIS) the chain is Extracellular. N-linked (GlcNAc...) asparagine glycosylation is present at asparagine 159. Residues 177 to 201 (MEYMVYFNFFVWVLPPLLLMVLIYL) form a helical membrane-spanning segment. Topologically, residues 202–235 (EVFYLIRRQLSKKASASSGDPHKYYGKELKIAKS) are cytoplasmic. Residues 236 to 259 (LALILFLFALSWLPLHILNCVTLF) form a helical membrane-spanning segment. The Extracellular portion of the chain corresponds to 260–267 (CPSCQKPS). A helical transmembrane segment spans residues 268–292 (ILVYTAIFLTHGNSAMNPIVYAFRI). Residues 293-328 (HKFRVTFLKIWNDHFRCRPAPAGDGDEDLPEEKPND) are Cytoplasmic-facing. A lipid anchor (S-palmitoyl cysteine) is attached at cysteine 309.

The protein belongs to the G-protein coupled receptor 1 family.

The protein localises to the cell membrane. In terms of biological role, receptor for adenosine. The activity of this receptor is mediated by G proteins which inhibit adenylyl cyclase. This is Adenosine receptor A1 (ADORA1) from Oryctolagus cuniculus (Rabbit).